Reading from the N-terminus, the 314-residue chain is Aspartate carbamoyltransferase catalytic subunit (314 aa).

2 residues coordinate carbamoyl phosphate: arginine 55 and threonine 56. Lysine 83 is a binding site for L-aspartate. Carbamoyl phosphate-binding residues include arginine 105, histidine 139, and glutamine 142. Arginine 172 and arginine 226 together coordinate L-aspartate. Glycine 267 and proline 268 together coordinate carbamoyl phosphate.

It belongs to the aspartate/ornithine carbamoyltransferase superfamily. ATCase family. Heterododecamer (2C3:3R2) of six catalytic PyrB chains organized as two trimers (C3), and six regulatory PyrI chains organized as three dimers (R2).

It catalyses the reaction carbamoyl phosphate + L-aspartate = N-carbamoyl-L-aspartate + phosphate + H(+). The protein operates within pyrimidine metabolism; UMP biosynthesis via de novo pathway; (S)-dihydroorotate from bicarbonate: step 2/3. In terms of biological role, catalyzes the condensation of carbamoyl phosphate and aspartate to form carbamoyl aspartate and inorganic phosphate, the committed step in the de novo pyrimidine nucleotide biosynthesis pathway. In Rhodococcus opacus (strain B4), this protein is Aspartate carbamoyltransferase catalytic subunit.